We begin with the raw amino-acid sequence, 195 residues long: Exosome complex component CSL4 (195 aa).

Residues serine 21 and serine 98 each carry the phosphoserine modification. Residues 66–147 form the S1 motif domain; that stretch reads DVGAIVTCKV…AQSNYLLTTA (82 aa).

Belongs to the CSL4 family. In terms of assembly, component of the RNA exosome core complex (Exo-9), composed of EXOSC1, EXOSC2, EXOSC3, EXOSC4, EXOSC5, EXOSC6, EXOSC7, EXOSC8 and EXOSC9; within the complex interacts with EXOSC6. The catalytically inactive RNA exosome core complex (Exo-9) associates with the catalytic subunit EXOSC10/RRP6. Exo-9 may associate with DIS3 to form the nucleolar exosome complex, or DIS3L to form the cytoplasmic exosome complex. Exo-9 is formed by a hexameric base ring consisting of the heterodimers EXOSC4-EXOSC9, EXOSC5-EXOSC8 and EXOSC6-EXOSC7, and a cap ring consisting of EXOSC1, EXOSC2 and EXOSC3. The RNA exosome complex associates with cofactors C1D/RRP47, MPHOSPH6/MPP6 and MTREX/MTR4. Interacts with DDX60.

Its subcellular location is the nucleus. It localises to the nucleolus. It is found in the cytoplasm. In terms of biological role, non-catalytic component of the RNA exosome complex which has 3'-&gt;5' exoribonuclease activity and participates in a multitude of cellular RNA processing and degradation events. In the nucleus, the RNA exosome complex is involved in proper maturation of stable RNA species such as rRNA, snRNA and snoRNA, in the elimination of RNA processing by-products and non-coding 'pervasive' transcripts, such as antisense RNA species and promoter-upstream transcripts (PROMPTs), and of mRNAs with processing defects, thereby limiting or excluding their export to the cytoplasm. The RNA exosome may be involved in Ig class switch recombination (CSR) and/or Ig variable region somatic hypermutation (SHM) by targeting AICDA deamination activity to transcribed dsDNA substrates. In the cytoplasm, the RNA exosome complex is involved in general mRNA turnover and specifically degrades inherently unstable mRNAs containing AU-rich elements (AREs) within their 3' untranslated regions, and in RNA surveillance pathways, preventing translation of aberrant mRNAs. It seems to be involved in degradation of histone mRNA. The catalytic inactive RNA exosome core complex of 9 subunits (Exo-9) is proposed to play a pivotal role in the binding and presentation of RNA for ribonucleolysis, and to serve as a scaffold for the association with catalytic subunits and accessory proteins or complexes. EXOSC1 as peripheral part of the Exo-9 complex stabilizes the hexameric ring of RNase PH-domain subunits through contacts with EXOSC6 and EXOSC8. This is Exosome complex component CSL4 (EXOSC1) from Homo sapiens (Human).